A 234-amino-acid polypeptide reads, in one-letter code: Segregation and condensation protein A (234 aa).

This sequence belongs to the ScpA family. In terms of assembly, component of a cohesin-like complex composed of ScpA, ScpB and the Smc homodimer, in which ScpA and ScpB bind to the head domain of Smc. The presence of the three proteins is required for the association of the complex with DNA.

Its subcellular location is the cytoplasm. Participates in chromosomal partition during cell division. May act via the formation of a condensin-like complex containing Smc and ScpB that pull DNA away from mid-cell into both cell halves. The chain is Segregation and condensation protein A from Streptococcus pyogenes serotype M12 (strain MGAS2096).